We begin with the raw amino-acid sequence, 308 residues long: Zinc finger protein unc-98 (308 aa).

2 consecutive C2H2-type zinc fingers follow at residues Tyr-111–His-133 and Tyr-139–His-161. Residues Gly-166–His-186 form a C2H2-type 3; degenerate zinc finger. A C2H2-type 4 zinc finger spans residues Tyr-244–His-266.

Its subcellular location is the nucleus. The protein localises to the cytoplasm. Probable transcription factor. Required for muscle structure. Its dual subcellular localization suggests that it may function both as a muscle adhesion complex protein and as a transcription factor, or work together with transcription factors, to influence gene expression. Thought to act as a molecular bridge between unc-97 and mhc-a at the M-line of muscles, possibly in a signaling role. The polypeptide is Zinc finger protein unc-98 (Caenorhabditis briggsae).